Here is a 564-residue protein sequence, read N- to C-terminus: MFS-type transporter dmxR4 (564 aa).

The segment at 1-61 is disordered; that stretch reads MSSERPDGSA…PAKEAPAKPA (61 aa). The segment covering 25–44 has biased composition (polar residues); the sequence is TDSSRTSNDASQTSQDTAVQ. Residues 47–57 show a composition bias toward basic and acidic residues; that stretch reads PPKEAPAKEAP. The next 5 helical transmembrane spans lie at 71–91, 106–126, 138–158, 169–189, and 199–219; these read IALL…DRSI, AGDI…FQLL, TVFV…GAAP, LAGI…VFLI, and GLFG…GGGF. Asn-222 is a glycosylation site (N-linked (GlcNAc...) asparagine). 7 helical membrane passes run 227 to 247, 265 to 285, 299 to 319, 348 to 368, 376 to 396, 405 to 425, and 438 to 458; these read WCFY…ALWM, GLDL…LLAL, IIAL…LQAF, GVHL…GGFF, SPLA…IYTF, WIGS…APNL, and SALA…VSVG. N-linked (GlcNAc...) asparagine glycosylation occurs at Asn-469. The next 2 helical transmembrane spans lie at 470-490 and 512-532; these read LSWI…VSFL and VFMI…SMEW. The disordered stretch occupies residues 534–564; that stretch reads SVKSRGSWDEKPAAKPTDKPTEEKKVPPEAV. Residues 539-564 show a composition bias toward basic and acidic residues; it reads GSWDEKPAAKPTDKPTEEKKVPPEAV.

The protein belongs to the major facilitator superfamily. TCR/Tet family.

It is found in the membrane. MFS-type transporter; part of the gene cluster that mediates the biosynthesis of the dimeric xanthones cryptosporioptides. The chain is MFS-type transporter dmxR4 from Cryptosporiopsis sp. (strain 8999).